Consider the following 472-residue polypeptide: Acetyl-CoA decarbonylase/synthase complex subunit beta 2 (472 aa).

[Ni-Fe-S] cluster is bound by residues Cys189, Cys192, Cys278, and Cys280.

This sequence belongs to the CdhC family. As to quaternary structure, monomer. The ACDS complex is made up of alpha, epsilon, beta, gamma and delta chains with a probable stoichiometry of (alpha(2)epsilon(2))(4)-beta(8)-(gamma(1)delta(1))(8) (Potential). [Ni-Fe-S] cluster serves as cofactor.

It carries out the reaction Co(I)-[corrinoid Fe-S protein] + acetyl-CoA + H(+) = methyl-Co(III)-[corrinoid Fe-S protein] + CO + CoA. It functions in the pathway one-carbon metabolism; methanogenesis from acetate. Its function is as follows. Part of a complex that catalyzes the reversible cleavage of acetyl-CoA, allowing growth on acetate as sole source of carbon and energy. The alpha-epsilon complex generates CO from CO(2), while the beta subunit (this protein) combines the CO with CoA and a methyl group to form acetyl-CoA. The methyl group, which is incorporated into acetyl-CoA, is transferred to the beta subunit by a corrinoid iron-sulfur protein (the gamma-delta complex). In Methanosarcina thermophila, this protein is Acetyl-CoA decarbonylase/synthase complex subunit beta 2 (cdhC2).